Here is a 221-residue protein sequence, read N- to C-terminus: Stromal cell-derived factor 2-like protein 1 (221 aa).

A signal peptide spans 1-28 (MWGASRGRVAGPTLLGLLLALSVRSGGA). MIR domains are found at residues 33–87 (AGLV…IRGG), 95–150 (GLPV…VRCS), and 151–205 (GQHW…AMEG). Serine 215 is modified (phosphoserine). Positions 218–221 (HDEL) match the Prevents secretion from ER motif.

As to expression, ubiquitously expressed with high expression in the testis, ovary, uterus, and low expression in heart and skeletal muscle.

Its subcellular location is the endoplasmic reticulum lumen. This chain is Stromal cell-derived factor 2-like protein 1 (Sdf2l1), found in Mus musculus (Mouse).